Reading from the N-terminus, the 216-residue chain is Uracil phosphoribosyltransferase (216 aa).

5-phospho-alpha-D-ribose 1-diphosphate-binding positions include Arg81, Arg106, and 135–143; that span reads DPMLATGSS. Uracil contacts are provided by residues Ile200 and 205-207; that span reads GDA. Asp206 contacts 5-phospho-alpha-D-ribose 1-diphosphate.

Belongs to the UPRTase family. It depends on Mg(2+) as a cofactor.

It catalyses the reaction UMP + diphosphate = 5-phospho-alpha-D-ribose 1-diphosphate + uracil. Its pathway is pyrimidine metabolism; UMP biosynthesis via salvage pathway; UMP from uracil: step 1/1. Its activity is regulated as follows. Allosterically activated by GTP. Functionally, catalyzes the conversion of uracil and 5-phospho-alpha-D-ribose 1-diphosphate (PRPP) to UMP and diphosphate. The sequence is that of Uracil phosphoribosyltransferase (upp) from Porphyromonas gingivalis (strain ATCC 33277 / DSM 20709 / CIP 103683 / JCM 12257 / NCTC 11834 / 2561).